Here is a 944-residue protein sequence, read N- to C-terminus: Protein translocase subunit SecA (944 aa).

Residues Q77, 95 to 99 (GEGKT), and D484 each bind ATP. The interval 920-944 (EQEKQTRKKKKKKPHEDESSKTKIG) is disordered. The segment covering 933-944 (PHEDESSKTKIG) has biased composition (basic and acidic residues).

It belongs to the SecA family. Monomer and homodimer. Part of the essential Sec protein translocation apparatus which comprises SecA, SecYEG and auxiliary proteins SecDF. Other proteins may also be involved.

Its subcellular location is the cell membrane. The protein localises to the cytoplasm. It catalyses the reaction ATP + H2O + cellular proteinSide 1 = ADP + phosphate + cellular proteinSide 2.. In terms of biological role, part of the Sec protein translocase complex. Interacts with the SecYEG preprotein conducting channel. Has a central role in coupling the hydrolysis of ATP to the transfer of proteins into and across the cell membrane, serving as an ATP-driven molecular motor driving the stepwise translocation of polypeptide chains across the membrane. This is Protein translocase subunit SecA from Mycoplasma mycoides subsp. mycoides SC (strain CCUG 32753 / NCTC 10114 / PG1).